Consider the following 225-residue polypeptide: 7-carboxy-7-deazaguanine synthase (225 aa).

Substrate is bound by residues 14-16 (LQG) and Arg29. Residues 20 to 225 (HFGKSAFFIR…LQTHKWLGVL (206 aa)) enclose the Radical SAM core domain. [4Fe-4S] cluster contacts are provided by Cys33, Cys37, and Cys40. Thr42 provides a ligand contact to Mg(2+). Thr77 serves as a coordination point for substrate. S-adenosyl-L-methionine-binding positions include Gly79 and 127–129 (SPK).

The protein belongs to the radical SAM superfamily. 7-carboxy-7-deazaguanine synthase family. In terms of assembly, homodimer. [4Fe-4S] cluster serves as cofactor. Requires S-adenosyl-L-methionine as cofactor. Mg(2+) is required as a cofactor.

It catalyses the reaction 6-carboxy-5,6,7,8-tetrahydropterin + H(+) = 7-carboxy-7-deazaguanine + NH4(+). Its pathway is purine metabolism; 7-cyano-7-deazaguanine biosynthesis. In terms of biological role, catalyzes the complex heterocyclic radical-mediated conversion of 6-carboxy-5,6,7,8-tetrahydropterin (CPH4) to 7-carboxy-7-deazaguanine (CDG), a step common to the biosynthetic pathways of all 7-deazapurine-containing compounds. This Prochlorococcus marinus (strain SARG / CCMP1375 / SS120) protein is 7-carboxy-7-deazaguanine synthase.